The sequence spans 151 residues: Trivalent organoarsenical cleaving enzyme (151 aa).

In terms of domain architecture, VOC spans 2–118 (SRVQLALRVP…GGEPWEVYVV (117 aa)). Residue Gln-5 coordinates Fe(2+). A roxarsone (III)-binding site is contributed by Asp-61. His-62 contributes to the Fe(2+) binding site. Roxarsone (III) contacts are provided by Cys-95 and Cys-96. A Fe(2+)-binding site is contributed by Glu-114.

In terms of assembly, monomer. It depends on Fe(2+) as a cofactor.

It catalyses the reaction methylarsonous acid + AH2 + O2 = arsenite + methanol + A + H(+). It carries out the reaction roxarsone (III) + AH2 + O2 = 4-hydroxy-3-nitrocyclohexa-2,5-dien-1-one + arsenite + A + H(+). The catalysed reaction is nitarsone (III) + AH2 + O2 = 4-nitrocyclohexa-2,5-dien-1-one + arsenite + A + H(+). The enzyme catalyses 4-aminophenylarsonous acid + AH2 + O2 = 4-aminocyclohexa-2,5-dien-1-one + arsenite + A. In terms of biological role, nonheme iron-dependent dioxygenase that can break carbon-arsenic bonds, playing a role in the detoxification of environmental organoarsenical compounds. Catalyzes the oxygen-dependent demethylation of highly toxic methylarsonous acid (MAs(III)) to arsenite, which can then be exported out of the cell. Can also cleave the C-As bond in several trivalent aromatic arsenicals, including roxarsone (III), nitarsone (III) and (4-aminophenyl)arsonous acid. Organoarsenical degradation by this enzyme is proposed to have a significant impact on the arsenic biogeocycle that maintains a balance between organic and inorganic species. In Thermomonospora curvata (strain ATCC 19995 / DSM 43183 / JCM 3096 / KCTC 9072 / NBRC 15933 / NCIMB 10081 / Henssen B9), this protein is Trivalent organoarsenical cleaving enzyme.